The sequence spans 367 residues: Gelsolin-like protein 1 (367 aa).

The tract at residues 1–185 is actin binding; the sequence is MATGLIKAKE…GQKQQIYVHE (185 aa). Gelsolin-like repeat units lie at residues 56–141 and 179–225; these read NFKV…ELFR and QQIY…KAMQ. The actin-actin interfilament contact point stretch occupies residues 106–109; the sequence is DEYG. The actin binding, Actin-severing stretch occupies residues 186-295; it reads VPLVKERLDH…LKTTEVKRGA (110 aa). Residues 235–257 are disordered; sequence PKAEAETLEDESTPESHKFYTSL. The stretch at 287–322 is one Gelsolin-like 3 repeat; the sequence is KTTEVKRGAVNSKDFSSNDVFILDTGDQCFVWVGKG. Residues 296 to 366 form an actin-severing, Ca-sensitive region; sequence VNSKDFSSND…LCKAFNVAIA (71 aa).

This sequence belongs to the villin/gelsolin family. Interacts with actin monomers and filaments. Expressed in circular and longitudinal muscle, pseudohearts, pharynx and gizzard. Also expressed in male germ cells at the proximal pole of primary spermatocytes in 16 cell-stage morulae, and in the distal parts of the spermatocytes in 32 and 64 cell-stage morulae. In the spermatids of the 128 cell-stage morulae it is expressed at the proximal pole of the elongated nucleus and the distal pole near the base of the flagellae.

Its subcellular location is the cytoplasm. It localises to the cytoskeleton. Functionally, calcium-regulated protein that binds to the plus (or barbed) ends of actin monomers or filaments, preventing monomer exchange (end-blocking or capping). Can promote the assembly of monomers into filaments (nucleation) as well as sever existing filaments. The chain is Gelsolin-like protein 1 from Lumbricus terrestris (Common earthworm).